Reading from the N-terminus, the 265-residue chain is Urease accessory protein UreH (265 aa).

It belongs to the UreD family. In terms of assembly, ureH, UreF and UreG form a complex that acts as a GTP-hydrolysis-dependent molecular chaperone, activating the urease apoprotein by helping to assemble the nickel containing metallocenter of UreC. The UreE protein probably delivers the nickel.

The protein localises to the cytoplasm. In terms of biological role, required for maturation of urease via the functional incorporation of the urease nickel metallocenter. The protein is Urease accessory protein UreH of Helicobacter pylori (strain P12).